A 288-amino-acid chain; its full sequence is 4-diphosphocytidyl-2-C-methyl-D-erythritol kinase (288 aa).

Residue K8 is part of the active site. 92-102 (PVAAGMAGGST) is a binding site for ATP. D134 is a catalytic residue.

Belongs to the GHMP kinase family. IspE subfamily.

The catalysed reaction is 4-CDP-2-C-methyl-D-erythritol + ATP = 4-CDP-2-C-methyl-D-erythritol 2-phosphate + ADP + H(+). Its pathway is isoprenoid biosynthesis; isopentenyl diphosphate biosynthesis via DXP pathway; isopentenyl diphosphate from 1-deoxy-D-xylulose 5-phosphate: step 3/6. Functionally, catalyzes the phosphorylation of the position 2 hydroxy group of 4-diphosphocytidyl-2C-methyl-D-erythritol. The protein is 4-diphosphocytidyl-2-C-methyl-D-erythritol kinase of Clostridium perfringens (strain ATCC 13124 / DSM 756 / JCM 1290 / NCIMB 6125 / NCTC 8237 / Type A).